The primary structure comprises 107 residues: Colipase (107 aa).

The first 17 residues, 1–17 (MEKVLVLLLVALSVAYA), serve as a signal peptide directing secretion. A propeptide spans 18–22 (APGPR) (enterostatin, activation peptide). Disulfide bonds link Cys34–Cys45, Cys40–Cys56, Cys44–Cys78, Cys66–Cys86, and Cys80–Cys104.

Belongs to the colipase family. Forms a 1:1 stoichiometric complex with pancreatic lipase. In terms of tissue distribution, expressed by the pancreas.

The protein resides in the secreted. Functionally, colipase is a cofactor of pancreatic lipase. It allows the lipase to anchor itself to the lipid-water interface. Without colipase the enzyme is washed off by bile salts, which have an inhibitory effect on the lipase. In terms of biological role, enterostatin has a biological activity as a satiety signal. The polypeptide is Colipase (CLPS) (Oryctolagus cuniculus (Rabbit)).